Consider the following 280-residue polypeptide: Phosphonates import ATP-binding protein PhnC (280 aa).

Positions 4 to 239 constitute an ABC transporter domain; sequence ITVTNLHKSY…VIDDIYGNIQ (236 aa). 36-43 lines the ATP pocket; sequence GESGAGKS. Residues 246–280 are disordered; it reads GDDANADVAPTTSSDGGTDAAGGPDQQPASDPHLS.

The protein belongs to the ABC transporter superfamily. Phosphonates importer (TC 3.A.1.9.1) family. The complex is composed of two ATP-binding proteins (PhnC), two transmembrane proteins (PhnE) and a solute-binding protein (PhnD).

The protein localises to the cell membrane. The catalysed reaction is phosphonate(out) + ATP + H2O = phosphonate(in) + ADP + phosphate + H(+). Part of the ABC transporter complex PhnCDE involved in phosphonates import. Responsible for energy coupling to the transport system. The protein is Phosphonates import ATP-binding protein PhnC of Halobacterium salinarum (strain ATCC 700922 / JCM 11081 / NRC-1) (Halobacterium halobium).